Consider the following 220-residue polypeptide: MHSAKLIDHTLLKPESTRTQIDQIIDEAKAYHFKSVCVNPTHVKYAAERLADSEVLVCTVIGFPLGASTTATKAFETEDAIQNGADEIDMVINIGALKDGRFDDVQQDIEAVVKAAKGHTVKVIIETVLLDHDEIVKASELTKAAGADFVKTSTGFAGGGATAEDVKLMKDTVGADVEVKASGGVRNLEDFNKMVEAGATRIGASAGVQIMQGLEADSDY.

Aspartate 89 functions as the Proton donor/acceptor in the catalytic mechanism. The active-site Schiff-base intermediate with acetaldehyde is lysine 151. Catalysis depends on lysine 180, which acts as the Proton donor/acceptor.

It belongs to the DeoC/FbaB aldolase family. DeoC type 1 subfamily.

The protein resides in the cytoplasm. It carries out the reaction 2-deoxy-D-ribose 5-phosphate = D-glyceraldehyde 3-phosphate + acetaldehyde. The protein operates within carbohydrate degradation; 2-deoxy-D-ribose 1-phosphate degradation; D-glyceraldehyde 3-phosphate and acetaldehyde from 2-deoxy-alpha-D-ribose 1-phosphate: step 2/2. In terms of biological role, catalyzes a reversible aldol reaction between acetaldehyde and D-glyceraldehyde 3-phosphate to generate 2-deoxy-D-ribose 5-phosphate. This is Deoxyribose-phosphate aldolase 2 from Staphylococcus aureus (strain MSSA476).